Reading from the N-terminus, the 427-residue chain is Histidinol dehydrogenase (427 aa).

Residues Ser232, Gln254, and His257 each contribute to the substrate site. Residues Gln254 and His257 each coordinate Zn(2+). Residues Glu322 and His323 each act as proton acceptor in the active site. Residues His323, Asp356, Glu410, and His415 each coordinate substrate. Residue Asp356 coordinates Zn(2+). His415 is a Zn(2+) binding site.

The protein belongs to the histidinol dehydrogenase family. Requires Zn(2+) as cofactor.

It catalyses the reaction L-histidinol + 2 NAD(+) + H2O = L-histidine + 2 NADH + 3 H(+). It participates in amino-acid biosynthesis; L-histidine biosynthesis; L-histidine from 5-phospho-alpha-D-ribose 1-diphosphate: step 9/9. Catalyzes the sequential NAD-dependent oxidations of L-histidinol to L-histidinaldehyde and then to L-histidine. In Listeria monocytogenes serovar 1/2a (strain ATCC BAA-679 / EGD-e), this protein is Histidinol dehydrogenase.